Consider the following 85-residue polypeptide: Sec-independent protein translocase protein TatA (85 aa).

A helical transmembrane segment spans residues 1–21 (MGSFSIWHWLIVLLIIMMVFG). Residues 39 to 51 (FKEGMREGSEDKP) are compositionally biased toward basic and acidic residues. The interval 39–85 (FKEGMREGSEDKPAGSQQGQQAAGQPPRELHDSTTIDVEARDKSKQG) is disordered. The span at 52–65 (AGSQQGQQAAGQPP) shows a compositional bias: low complexity. Residues 66–85 (RELHDSTTIDVEARDKSKQG) show a composition bias toward basic and acidic residues.

The protein belongs to the TatA/E family. The Tat system comprises two distinct complexes: a TatABC complex, containing multiple copies of TatA, TatB and TatC subunits, and a separate TatA complex, containing only TatA subunits. Substrates initially bind to the TatABC complex, which probably triggers association of the separate TatA complex to form the active translocon.

Its subcellular location is the cell inner membrane. Its function is as follows. Part of the twin-arginine translocation (Tat) system that transports large folded proteins containing a characteristic twin-arginine motif in their signal peptide across membranes. TatA could form the protein-conducting channel of the Tat system. The polypeptide is Sec-independent protein translocase protein TatA (Ralstonia nicotianae (strain ATCC BAA-1114 / GMI1000) (Ralstonia solanacearum)).